Here is a 483-residue protein sequence, read N- to C-terminus: Triacylglycerol lipase ptl3 (483 aa).

The region spanning 141-340 (LILSGGGTFG…DNDIPHAKLT (200 aa)) is the PNPLA domain. The short motif at 145-150 (GGGTFG) is the GXGXXG element. The short motif at 172 to 176 (GSSAG) is the GXSXG element. Ser174 functions as the Nucleophile in the catalytic mechanism. Asp327 (proton acceptor) is an active-site residue.

Its subcellular location is the cytoplasm. The protein localises to the lipid droplet. The enzyme catalyses a triacylglycerol + H2O = a diacylglycerol + a fatty acid + H(+). Functionally, lipid particle-localized triacylglycerol (TAG) lipase. The lipid droplet/particle is a lipid storage compartment which serves as a depot of energy and building blocks for membrane lipid biosynthesis. Involved in the mobilization of the non-polar storage lipids triacylglycerols (TAGs) from lipid particles by hydrolysis of TAGs, releasing and supplying specific fatty acids to the appropriate metabolic pathways. In Schizosaccharomyces pombe (strain 972 / ATCC 24843) (Fission yeast), this protein is Triacylglycerol lipase ptl3 (ptl3).